Reading from the N-terminus, the 887-residue chain is ATP-dependent DNA helicase srs2 (887 aa).

Positions Lys9–Ala304 constitute a UvrD-like helicase ATP-binding domain. ATP contacts are provided by residues Gly33–Arg38 and Arg302. The UvrD-like helicase C-terminal domain occupies Lys305 to Gly597.

Belongs to the helicase family. UvrD subfamily.

It localises to the nucleus. It catalyses the reaction Couples ATP hydrolysis with the unwinding of duplex DNA by translocating in the 3'-5' direction.. The catalysed reaction is ATP + H2O = ADP + phosphate + H(+). Functionally, ATP-dependent DNA helicase involved in DNA repair at least for UV-induced lesions. Also aids the recombinational repair of camptothecin-induced collapsed replication forks. This Schizosaccharomyces pombe (strain 972 / ATCC 24843) (Fission yeast) protein is ATP-dependent DNA helicase srs2 (srs2).